The following is a 137-amino-acid chain: Peptide methionine sulfoxide reductase MsrB (137 aa).

A MsrB domain is found at 7–129 (AEELKKNLSE…NSASLRFTDG (123 aa)). Positions 46, 49, 95, and 98 each coordinate Zn(2+). Cys118 acts as the Nucleophile in catalysis.

This sequence belongs to the MsrB Met sulfoxide reductase family. Requires Zn(2+) as cofactor.

It carries out the reaction L-methionyl-[protein] + [thioredoxin]-disulfide + H2O = L-methionyl-(R)-S-oxide-[protein] + [thioredoxin]-dithiol. This Escherichia coli O8 (strain IAI1) protein is Peptide methionine sulfoxide reductase MsrB.